The following is a 154-amino-acid chain: Large ribosomal subunit protein uL13 (154 aa).

The protein belongs to the universal ribosomal protein uL13 family. As to quaternary structure, part of the 50S ribosomal subunit.

In terms of biological role, this protein is one of the early assembly proteins of the 50S ribosomal subunit, although it is not seen to bind rRNA by itself. It is important during the early stages of 50S assembly. The protein is Large ribosomal subunit protein uL13 of Rhodopseudomonas palustris (strain ATCC BAA-98 / CGA009).